We begin with the raw amino-acid sequence, 469 residues long: 3-isopropylmalate dehydratase large subunit (469 aa).

3 residues coordinate [4Fe-4S] cluster: C347, C408, and C411.

Belongs to the aconitase/IPM isomerase family. LeuC type 1 subfamily. In terms of assembly, heterodimer of LeuC and LeuD. It depends on [4Fe-4S] cluster as a cofactor.

It catalyses the reaction (2R,3S)-3-isopropylmalate = (2S)-2-isopropylmalate. The protein operates within amino-acid biosynthesis; L-leucine biosynthesis; L-leucine from 3-methyl-2-oxobutanoate: step 2/4. Catalyzes the isomerization between 2-isopropylmalate and 3-isopropylmalate, via the formation of 2-isopropylmaleate. The chain is 3-isopropylmalate dehydratase large subunit from Actinobacillus pleuropneumoniae serotype 7 (strain AP76).